The following is a 484-amino-acid chain: MFIRRLHKFSYNPQYKLKCGLEIHTQLKTKYKLFSLSPTSYNEPANTKLSYFDVGLPGTQPKLNPEALLLALRASVAFNSEIQPYSSFDRKHYFYPDQPLGYQITQHYYPLAKNGYLELNKYDNIKDKRIRLEQIQLEQDTGKTVNYDDRINVDYNRANTPLIEVVTKPDFENIEQVQAFVRKYQLIVSHLDICTGELETGAMRVDANISVNGNPRVEIKNLGSSGEIVDALQFEYMRQVRLLQNGQGINQETRGWTGEGTESLRSKENAVDYRYVPDSELPAIRLDQQITKQLQKSLPELPDTILERLINKPYNLDLAHAKNLLYQPEVLKYYETIFASISSNANKWFFQELLAAFAKRGVEFDVDIVPPSMLVDIVKKVETEEISLAAARIILKYIVENKSTNTLVELVEILDLKKPEANDELQLAVKEICQQIIKNNPEVVTKIANGHKNALQVLIGQAMKATKGKVHAKDFKEQFIELLK.

Belongs to the GatB/GatE family. GatB subfamily. In terms of assembly, subunit of the heterotrimeric GatFAB amidotransferase (AdT) complex, composed of A, B and F subunits.

Its subcellular location is the mitochondrion. It catalyses the reaction L-glutamyl-tRNA(Gln) + L-glutamine + ATP + H2O = L-glutaminyl-tRNA(Gln) + L-glutamate + ADP + phosphate + H(+). Allows the formation of correctly charged Gln-tRNA(Gln) through the transamidation of misacylated Glu-tRNA(Gln) in the mitochondria. The reaction takes place in the presence of glutamine and ATP through an activated gamma-phospho-Glu-tRNA(Gln). In Candida tropicalis (strain ATCC MYA-3404 / T1) (Yeast), this protein is Glutamyl-tRNA(Gln) amidotransferase subunit B, mitochondrial.